Here is a 131-residue protein sequence, read N- to C-terminus: Small ribosomal subunit protein uS12c (131 aa).

This sequence belongs to the universal ribosomal protein uS12 family. As to quaternary structure, part of the 30S ribosomal subunit.

The protein resides in the plastid. It localises to the chloroplast. With S4 and S5 plays an important role in translational accuracy. Located at the interface of the 30S and 50S subunits. This is Small ribosomal subunit protein uS12c (rps12) from Stigeoclonium helveticum (Green alga).